A 309-amino-acid polypeptide reads, in one-letter code: NADH-cytochrome b5 reductase 1 (309 aa).

Residues 29 to 49 traverse the membrane as a helical segment; the sequence is EFVPYAVALTAVLAGFKLFTG. The FAD-binding FR-type domain maps to 60 to 165; it reads TEFQEFVLKE…RGPKGAMVYT (106 aa). Residues 145-160 and 171-208 contribute to the FAD site; these read TTLK…GPKG and HIGM…KVDL.

It belongs to the flavoprotein pyridine nucleotide cytochrome reductase family. In terms of assembly, monomer. Component of the 2-(3-amino-3-carboxypropyl)histidine synthase complex composed of dph1, dph2, dph3 and a NADH-dependent reductase, predominantly cbr1. FAD serves as cofactor.

Its subcellular location is the mitochondrion outer membrane. It catalyses the reaction 2 Fe(III)-[cytochrome b5] + NADH = 2 Fe(II)-[cytochrome b5] + NAD(+) + H(+). The enzyme catalyses 2 Fe(3+)-[Dph3] + NADH = 2 Fe(2+)-[Dph3] + NAD(+) + H(+). It participates in protein modification; peptidyl-diphthamide biosynthesis. Functionally, NADH-dependent reductase for dph3 and cytochrome b5. Required for the first step of diphthamide biosynthesis, a post-translational modification of histidine which occurs in elongation factor 2. Dph1 and dph2 transfer a 3-amino-3-carboxypropyl (ACP) group from S-adenosyl-L-methionine (SAM) to a histidine residue, the reaction is assisted by a reduction system comprising dph3 and a NADH-dependent reductase, predominantly cbr1. By reducing dph3, also involved in the formation of the tRNA wobble base modification mcm5s 2U (5-methoxycarbonylmethyl-2-thiouridine), mediated by the elongator complex. The cytochrome b5/NADH cytochrome b5 reductase electron transfer system supports the catalytic activity of several sterol biosynthetic enzymes. The chain is NADH-cytochrome b5 reductase 1 (cbr1) from Aspergillus clavatus (strain ATCC 1007 / CBS 513.65 / DSM 816 / NCTC 3887 / NRRL 1 / QM 1276 / 107).